A 311-amino-acid chain; its full sequence is Malate dehydrogenase (311 aa).

NAD(+) contacts are provided by residues 7 to 13 (GAAGGIG) and Asp34. Residues Arg81 and Arg87 each contribute to the substrate site. Residues Asn94 and 117–119 (ITN) contribute to the NAD(+) site. Residues Asn119 and Arg153 each contribute to the substrate site. The active-site Proton acceptor is the His177. Residue Met227 participates in NAD(+) binding.

This sequence belongs to the LDH/MDH superfamily. MDH type 1 family. Homodimer.

The enzyme catalyses (S)-malate + NAD(+) = oxaloacetate + NADH + H(+). In terms of biological role, catalyzes the reversible oxidation of malate to oxaloacetate. In Shewanella halifaxensis (strain HAW-EB4), this protein is Malate dehydrogenase.